The chain runs to 1109 residues: Coiled-coil domain-containing protein 158 (1109 aa).

Residues 1 to 12 (MESKACESKNED) show a composition bias toward basic and acidic residues. The disordered stretch occupies residues 1 to 31 (MESKACESKNEDLLPSGITSKGGSSSPFFVT). A compositionally biased stretch (polar residues) spans 17–31 (GITSKGGSSSPFFVT). Coiled coils occupy residues 71–166 (GKEH…MLKD) and 242–828 (VEDQ…QEQE). Disordered stretches follow at residues 843 to 897 (LQGP…DPTR) and 952 to 1061 (HRSN…TGKT). Polar residues-rich tracts occupy residues 862–882 (ASVT…SFLS), 953–970 (RSNN…SSET), and 988–998 (SCFTFTSTASP). Residues 999 to 1019 (SGKMSASRSFSSSPKKSPVHS) show a composition bias toward low complexity. Composition is skewed to polar residues over residues 1020-1037 (LLTS…QYRS) and 1043-1061 (SPTS…TGKT). Residues 1053-1109 (PSLETTGKTCQKLQNRLESLQTLVEDLQLKNQAMSSMIRNQEKRIQKVKDQEKMLLK) are a coiled coil.

The protein is Coiled-coil domain-containing protein 158 (Ccdc158) of Mus musculus (Mouse).